Here is a 520-residue protein sequence, read N- to C-terminus: Bile acid--coenzyme A ligase (520 aa).

It belongs to the ATP-dependent AMP-binding enzyme family. As to quaternary structure, homodimer. It depends on Mg(2+) as a cofactor.

It catalyses the reaction cholate + ATP + CoA = choloyl-CoA + AMP + diphosphate. The catalysed reaction is deoxycholate + ATP + CoA = deoxycholoyl-CoA + AMP + diphosphate. The enzyme catalyses chenodeoxycholate + ATP + CoA = chenodeoxycholoyl-CoA + AMP + diphosphate. It participates in lipid metabolism; bile acid biosynthesis. Its activity is regulated as follows. Inhibited by diphosphate. Functions in the bile acid 7alpha-dehydroxylation pathway, which forms secondary bile acids via the 7alpha-dehydroxylation of primary bile acids, and is carried out by intestinal anaerobic bacteria. Catalyzes the initial step in this pathway, i.e. the ATP-dependent thioesterification of primary bile acids with coenzyme A. Is active with C-24 bile acids with free carboxyl groups such as cholate, deoxycholate and chenodeoxycholate. Produces AMP and pyrophosphate in addition to the bile acid-CoA thioester. This Clostridium scindens (strain JCM 10418 / VPI 12708) protein is Bile acid--coenzyme A ligase.